Reading from the N-terminus, the 148-residue chain is Large ribosomal subunit protein bL9 (148 aa).

Belongs to the bacterial ribosomal protein bL9 family.

Binds to the 23S rRNA. This chain is Large ribosomal subunit protein bL9, found in Aeromonas salmonicida (strain A449).